A 199-amino-acid polypeptide reads, in one-letter code: 3-isopropylmalate dehydratase small subunit (199 aa).

The protein belongs to the LeuD family. LeuD type 1 subfamily. In terms of assembly, heterodimer of LeuC and LeuD.

It carries out the reaction (2R,3S)-3-isopropylmalate = (2S)-2-isopropylmalate. Its pathway is amino-acid biosynthesis; L-leucine biosynthesis; L-leucine from 3-methyl-2-oxobutanoate: step 2/4. In terms of biological role, catalyzes the isomerization between 2-isopropylmalate and 3-isopropylmalate, via the formation of 2-isopropylmaleate. The polypeptide is 3-isopropylmalate dehydratase small subunit (Aeromonas salmonicida (strain A449)).